The chain runs to 159 residues: NADH-quinone oxidoreductase subunit B (159 aa).

Residues C37, C38, C102, and C132 each contribute to the [4Fe-4S] cluster site.

Belongs to the complex I 20 kDa subunit family. NDH-1 is composed of 14 different subunits. Subunits NuoB, C, D, E, F, and G constitute the peripheral sector of the complex. [4Fe-4S] cluster serves as cofactor.

The protein resides in the cell inner membrane. The catalysed reaction is a quinone + NADH + 5 H(+)(in) = a quinol + NAD(+) + 4 H(+)(out). Functionally, NDH-1 shuttles electrons from NADH, via FMN and iron-sulfur (Fe-S) centers, to quinones in the respiratory chain. Couples the redox reaction to proton translocation (for every two electrons transferred, four hydrogen ions are translocated across the cytoplasmic membrane), and thus conserves the redox energy in a proton gradient. The protein is NADH-quinone oxidoreductase subunit B of Ruthia magnifica subsp. Calyptogena magnifica.